The following is a 483-amino-acid chain: Probable glycosyltransferase 4 (483 aa).

Topologically, residues 1 to 26 (MSKLQDRHGGEAAADVGRRARHQRLL) are cytoplasmic. The chain crosses the membrane as a helical; Signal-anchor for type II membrane protein span at residues 27-47 (LSFPVFPIVLLLLAPCTIFFF). The Lumenal segment spans residues 48–483 (TSGDVPLPRI…KKTSRAARPM (436 aa)). The segment at 71–119 (AVAADTSPPPPSPPSSSPPPLSFPPPPPPPSSPPPPALPVVDDHSDTQR) is disordered. The segment covering 77 to 108 (SPPPPSPPSSSPPPLSFPPPPPPPSSPPPPAL) has biased composition (pro residues). An N-linked (GlcNAc...) asparagine glycan is attached at asparagine 448.

This sequence belongs to the glycosyltransferase 34 family.

The protein resides in the golgi apparatus membrane. Its function is as follows. Probable glycosyltransferase that may be involved in the biosynthesis of xyloglucan. This is Probable glycosyltransferase 4 from Oryza sativa subsp. indica (Rice).